We begin with the raw amino-acid sequence, 1379 residues long: ABC multidrug transporter MDR2 (1379 aa).

The chain crosses the membrane as a helical span at residues 65–85 (IALIVIGTIAGIGAGIPFPLL). The ABC transmembrane type-1 1 domain maps to 69-367 (VIGTIAGIGA…MAPFMHIFAS (299 aa)). The N-linked (GlcNAc...) asparagine glycan is linked to N97. The next 5 membrane-spanning stretches (helical) occupy residues 119–139 (VLQVIYVSILNFVCMYIHTGC), 193–213 (KVGLFIGTISYFVAAYIVAFL), 215–235 (VATIAAMLMSVVPIYFLMAFG), 301–321 (IQFGMLYFVAYASNALAFWQG), and 336–356 (VSVGAVYTVIFVLLDASFVLS). The 280-residue stretch at 403–682 (IELQDVTFNY…DGVYAGMVRL (280 aa)) folds into the ABC transporter 1 domain. Residue 438 to 445 (GTSGSGKS) participates in ATP binding. Residues N552 and N633 are each glycosylated (N-linked (GlcNAc...) asparagine). Residues 738–758 (YMPEEADSLPTEPENEKEKPK) are disordered. 4 consecutive transmembrane segments (helical) span residues 781–801 (LGLITSIMIGVSYTGEAVIFG), 820–840 (GMLFGLLFFILAIVKFAAVIV), 901–921 (IGVLFSTVANLFAGVILSHVI), and 922–942 (AWRIAVVLLATLPVLLASGVL). In terms of domain architecture, ABC transmembrane type-1 2 spans 781–1068 (LGLITSIMIG…MFALVPDISK (288 aa)). Residue N989 is glycosylated (N-linked (GlcNAc...) asparagine). Helical transmembrane passes span 1008–1028 (FWLSLAYSISTLVYALAYWWG) and 1032–1052 (ILAGMYTQVQFFIVLPALLFS). The ABC transporter 2 domain maps to 1135-1374 (VQFRNVHFRY…CESYRANVIH (240 aa)). 1170 to 1177 (GPSGSGKS) is an ATP binding site.

It belongs to the ABC transporter superfamily. ABCB family. Multidrug resistance exporter (TC 3.A.1.201) subfamily.

The protein localises to the cell membrane. Its function is as follows. Pleiotropic ABC efflux transporter that may be involved in the modulation susceptibility to a wide range of unrelated cytotoxic compounds. In Trichophyton equinum (strain ATCC MYA-4606 / CBS 127.97) (Horse ringworm fungus), this protein is ABC multidrug transporter MDR2.